Reading from the N-terminus, the 31-residue chain is Cytochrome b6-f complex subunit 6 (31 aa).

Residues 3–23 traverse the membrane as a helical segment; it reads ILIGYIILLACAFGLAAGLFF.

The protein belongs to the PetL family. In terms of assembly, the 4 large subunits of the cytochrome b6-f complex are cytochrome b6, subunit IV (17 kDa polypeptide, PetD), cytochrome f and the Rieske protein, while the 4 small subunits are PetG, PetL, PetM and PetN. The complex functions as a dimer.

Its subcellular location is the plastid. The protein resides in the chloroplast thylakoid membrane. Functionally, component of the cytochrome b6-f complex, which mediates electron transfer between photosystem II (PSII) and photosystem I (PSI), cyclic electron flow around PSI, and state transitions. PetL is important for photoautotrophic growth as well as for electron transfer efficiency and stability of the cytochrome b6-f complex. In Rhodomonas salina (Cryptomonas salina), this protein is Cytochrome b6-f complex subunit 6.